We begin with the raw amino-acid sequence, 150 residues long: Large ribosomal subunit protein bL9 (150 aa).

This sequence belongs to the bacterial ribosomal protein bL9 family.

Binds to the 23S rRNA. This chain is Large ribosomal subunit protein bL9, found in Lactiplantibacillus plantarum (strain ATCC BAA-793 / NCIMB 8826 / WCFS1) (Lactobacillus plantarum).